Reading from the N-terminus, the 601-residue chain is Elongation factor 4 (601 aa).

Positions Gln-6–Gln-188 constitute a tr-type G domain. Residues Asp-18–Thr-23 and Asn-135–Asp-138 contribute to the GTP site.

Belongs to the TRAFAC class translation factor GTPase superfamily. Classic translation factor GTPase family. LepA subfamily.

Its subcellular location is the cell membrane. The enzyme catalyses GTP + H2O = GDP + phosphate + H(+). In terms of biological role, required for accurate and efficient protein synthesis under certain stress conditions. May act as a fidelity factor of the translation reaction, by catalyzing a one-codon backward translocation of tRNAs on improperly translocated ribosomes. Back-translocation proceeds from a post-translocation (POST) complex to a pre-translocation (PRE) complex, thus giving elongation factor G a second chance to translocate the tRNAs correctly. Binds to ribosomes in a GTP-dependent manner. The protein is Elongation factor 4 of Desulfitobacterium hafniense (strain DSM 10664 / DCB-2).